Reading from the N-terminus, the 602-residue chain is MRSMRALQNALSRAGSHGRRGGWGHPSRGPLLGRGVRYYLGEAAAQGRGTPHSHQPQHSDHDASHSGMLPRLGDLLFYTIAEGQERIPIHKFTTALKATGLQTSDPRLQDCMSKMQRMVQESSSGGLLDRELFQKCVSSNIVLLTQAFRKKFVIPDFEEFTGHVDRIFEDAKEPTGGKVAAYIPHLAKSNPDLWGVSLCTVDGQRHSVGHTKIPFCLQSCVKPLTYAISVSTLGTDYVHKFVGKEPSGLRYNKLSLNEEGIPHNPMVNAGAIVVSSLIKMDCNKAEKFDFVLQYLNKMAGNEFMGFSNATFQSEKETGDRNYAIGYYLKEKKCFPKGVDMMAALDLYFQLCSVEVTCESGSVMAATLANGGICPITGESVLSAEAVRNTLSLMHSCGMYDFSGQFAFHVGLPAKSAVSGAILLVVPNVMGMMCLSPPLDKLGNSQRGINFCQKLVSLFNFHNYDNLRHCARKLDPRREGGEVRNKTVVNLLFAAYSGDVSALRRFALSAMDMEQKDYDSRTALHVAAAEGHIEVVKFLIEACKVNPFVKDRWGNIPLDDAVQFNHLEVVKLLQDYHDSYLLSETQAEAAAETLSKENLESMV.

Residues 1-14 (MRSMRALQNALSRA) constitute a mitochondrion transit peptide. Disordered stretches follow at residues 1–29 (MRSMRALQNALSRAGSHGRRGGWGHPSRG) and 45–66 (AQGRGTPHSHQPQHSDHDASHS). S219 lines the substrate pocket. Residue K253 is modified to N6-succinyllysine. N268 lines the substrate pocket. 2 positions are modified to N6-acetyllysine: K279 and K284. 2 residues coordinate substrate: E314 and N321. K329 carries the post-translational modification N6-acetyllysine. Substrate-binding residues include Y347, Y399, and V417. 2 ANK repeats span residues 518-551 (DSRTALHVAAAEGHIEVVKFLIEACKVNPFVKDR) and 552-585 (WGNIPLDDAVQFNHLEVVKLLQDYHDSYLLSETQ).

It belongs to the glutaminase family. Homotetramer, dimer of dimers. Does not assemble into higher oligomers. Interacts with the PDZ domain of the syntrophin SNTA1. Interacts with the PDZ domain of TAX1BP3.

The protein localises to the mitochondrion. The catalysed reaction is L-glutamine + H2O = L-glutamate + NH4(+). With respect to regulation, enzyme activity is not stimulated by phosphate. Phosphate increases kcat, but decreases substrate affinity, resulting in unchanged enzyme activity. In terms of biological role, plays an important role in the regulation of glutamine catabolism. Promotes mitochondrial respiration and increases ATP generation in cells by catalyzing the synthesis of glutamate and alpha-ketoglutarate. Increases cellular anti-oxidant function via NADH and glutathione production. May play a role in preventing tumor proliferation. The chain is Glutaminase liver isoform, mitochondrial (Gls2) from Mus musculus (Mouse).